A 465-amino-acid polypeptide reads, in one-letter code: Pre-mRNA-splicing factor URN1 (465 aa).

The region spanning 1-32 (MRGEWQEFKTPAGKKYYYNKNTKQSRWEKPNL) is the WW domain. Disordered stretches follow at residues 28–49 (EKPNLKKGSNLESNAKESQTER), 144–198 (ERKD…VNQD), and 266–288 (ERSGNATAEESDSEDNSEDDSEV). At Ser150 the chain carries Phosphoserine. Positions 160-175 (LQESHTGLVSGYGSSS) are enriched in polar residues. The segment covering 176 to 192 (GEEDEEEDEEEDEENEE) has biased composition (acidic residues). The 55-residue stretch at 212–266 (DIDERNIFFELFDRYKLDKFSTWSLQSKKIENDPDFYKIRDDTVRESLFEEWCGE) folds into the FF domain. Residues 274 to 288 (EESDSEDNSEDDSEV) show a composition bias toward acidic residues.

In terms of assembly, component of the precatalytic spliceosomal complex B. Interacts with PRP19.

It is found in the nucleus. Its function is as follows. Component of the spliceosome involved in mRNA processing. This is Pre-mRNA-splicing factor URN1 (URN1) from Saccharomyces cerevisiae (strain ATCC 204508 / S288c) (Baker's yeast).